A 128-amino-acid chain; its full sequence is Large ribosomal subunit protein bL17 (128 aa).

This sequence belongs to the bacterial ribosomal protein bL17 family. As to quaternary structure, part of the 50S ribosomal subunit. Contacts protein L32.

The chain is Large ribosomal subunit protein bL17 from Streptococcus mutans serotype c (strain ATCC 700610 / UA159).